The primary structure comprises 639 residues: ATP-dependent RNA helicase DDX51 (639 aa).

The tract at residues 1 to 131 (MALFHIARYA…QEDVQRPPAP (131 aa)) is disordered. Residue Ala-2 is modified to N-acetylalanine. Positions 24 to 48 (AGSRARVLLERLQNRARERQQREPE) are enriched in basic and acidic residues. Positions 50–63 (ETTGTAGEGEAAAA) are enriched in low complexity. Over residues 64–76 (GKRRRRPRRRRRV) the composition is skewed to basic residues. Ser-79 is modified (phosphoserine). Positions 94–105 (ADKDVDAGRGEE) are enriched in basic and acidic residues. The Q motif signature appears at 193–201 (YFPVQAAVI). The region spanning 215–424 (GRGGYQPSDL…RLGLYQPRLF (210 aa)) is the Helicase ATP-binding domain. 228-235 (APTGSGKT) serves as a coordination point for ATP. The DEAD box signature appears at 343–346 (DEAD). Ser-432 carries the phosphoserine modification. The Helicase C-terminal domain occupies 467–615 (IVLHLVLRMS…EIPRKLLQPL (149 aa)).

It belongs to the DEAD box helicase family. DDX51/DBP6 subfamily.

The protein resides in the nucleus. It is found in the nucleolus. The catalysed reaction is ATP + H2O = ADP + phosphate + H(+). Its function is as follows. ATP-binding RNA helicase involved in the biogenesis of 60S ribosomal subunits. The protein is ATP-dependent RNA helicase DDX51 (Ddx51) of Mus musculus (Mouse).